Reading from the N-terminus, the 269-residue chain is Energy-coupling factor transporter ATP-binding protein EcfA1 (269 aa).

The 235-residue stretch at 8-242 (IVFKNVSFQY…AEELTRIGLD (235 aa)) folds into the ABC transporter domain. 42–49 (GHNGSGKS) serves as a coordination point for ATP.

The protein belongs to the ABC transporter superfamily. Energy-coupling factor EcfA family. In terms of assembly, forms a stable energy-coupling factor (ECF) transporter complex composed of 2 membrane-embedded substrate-binding proteins (S component), 2 ATP-binding proteins (A component) and 2 transmembrane proteins (T component).

The protein resides in the cell membrane. Its function is as follows. ATP-binding (A) component of a common energy-coupling factor (ECF) ABC-transporter complex. Unlike classic ABC transporters this ECF transporter provides the energy necessary to transport a number of different substrates. The sequence is that of Energy-coupling factor transporter ATP-binding protein EcfA1 from Staphylococcus aureus (strain USA300).